The primary structure comprises 195 residues: Protein Nef (195 aa).

Residue G2 is the site of N-myristoyl glycine; by host attachment. Residues 2–53 form an N-terminal; associates with the host plasma membrane region; that stretch reads GNIFGRWPGARKAIEDLHNTSSEPVGQASQDLQNKGGLTTNTLGTSADVLEY. Residues 7 to 22 are necessary for MHC-I internalization; it reads RWPGARKAIEDLHNTS. An acidic region spans residues 59 to 61; sequence EEE. The tract at residues 65 to 74 is SH3-binding; the sequence is PVRPAVPMRP. Residues 65–74 form an SH3-binding; interaction with Src family tyrosine kinases region; it reads PVRPAVPMRP. Positions 68–71 match the PxxP motif; that stretch reads PAVP. Residues 104–120 are mediates dimerization; it reads AILDTWMYNTQGVFPDW. The interval 144–171 is binding to ATP6V1H; the sequence is VDPPEDDEKNILLHPACSHGTTDPDGET. A Di-leucine internalization motif; necessary for CD4 internalization motif is present at residues 155–156; sequence LL.

It belongs to the lentivirus primate group Nef protein family. As to quaternary structure, homodimer.

The protein localises to the host cell membrane. The protein resides in the host cytoplasm. It localises to the host perinuclear region. It is found in the virion. Its subcellular location is the secreted. Factor of infectivity and pathogenicity, required for optimal virus replication. Alters numerous pathways of T-lymphocyte function and down-regulates immunity surface molecules in order to evade host defense and increase viral infectivity. Alters the functionality of other immunity cells, like dendritic cells, monocytes/macrophages and NK cells. One of the earliest and most abundantly expressed viral proteins. In terms of biological role, in infected CD4(+) T-lymphocytes, down-regulates the surface MHC-I, mature MHC-II, CD4, CD28 and probably other immunity surface molecules. In consequence infected cells are masked for immune recognition by cytotoxic T-lymphocytes. Decreasing the number of immune receptors also prevents reinfection by more HIV particles (superinfection). Functionally, bypasses host T-cell signaling by inducing a transcriptional program nearly identical to that of anti-CD3 cell activation. Interaction with TCR-zeta chain up-regulates the Fas ligand (FasL). Increasing surface FasL molecules and decreasing surface MHC-I molecules on infected CD4(+) cells send attacking cytotoxic CD8+ T-lymphocytes into apoptosis. Its function is as follows. Plays a role in optimizing the host cell environment for viral replication without causing cell death by apoptosis. Protects the infected cells from apoptosis in order to keep them alive until the next virus generation is ready to strike. This is Protein Nef from Pan troglodytes (Chimpanzee).